Consider the following 91-residue polypeptide: Small ribosomal subunit protein uS19 (91 aa).

This sequence belongs to the universal ribosomal protein uS19 family.

In terms of biological role, protein S19 forms a complex with S13 that binds strongly to the 16S ribosomal RNA. The protein is Small ribosomal subunit protein uS19 of Marinobacter nauticus (strain ATCC 700491 / DSM 11845 / VT8) (Marinobacter aquaeolei).